The sequence spans 425 residues: Serine--tRNA ligase (425 aa).

T230–E232 is an L-serine binding site. R261–E263 contributes to the ATP binding site. Position 284 (E284) interacts with L-serine. E348–S351 contacts ATP. S384 lines the L-serine pocket.

The protein belongs to the class-II aminoacyl-tRNA synthetase family. Type-1 seryl-tRNA synthetase subfamily. Homodimer. The tRNA molecule binds across the dimer.

The protein resides in the cytoplasm. It carries out the reaction tRNA(Ser) + L-serine + ATP = L-seryl-tRNA(Ser) + AMP + diphosphate + H(+). It catalyses the reaction tRNA(Sec) + L-serine + ATP = L-seryl-tRNA(Sec) + AMP + diphosphate + H(+). The protein operates within aminoacyl-tRNA biosynthesis; selenocysteinyl-tRNA(Sec) biosynthesis; L-seryl-tRNA(Sec) from L-serine and tRNA(Sec): step 1/1. In terms of biological role, catalyzes the attachment of serine to tRNA(Ser). Is also able to aminoacylate tRNA(Sec) with serine, to form the misacylated tRNA L-seryl-tRNA(Sec), which will be further converted into selenocysteinyl-tRNA(Sec). In Streptococcus pyogenes serotype M4 (strain MGAS10750), this protein is Serine--tRNA ligase.